The following is a 149-amino-acid chain: Large ribosomal subunit protein uL22c (149 aa).

Belongs to the universal ribosomal protein uL22 family. In terms of assembly, part of the 50S ribosomal subunit.

The protein resides in the plastid. Its subcellular location is the chloroplast. This protein binds specifically to 23S rRNA. Its function is as follows. The globular domain of the protein is located near the polypeptide exit tunnel on the outside of the subunit, while an extended beta-hairpin is found that lines the wall of the exit tunnel in the center of the 70S ribosome. In Pelargonium hortorum (Common geranium), this protein is Large ribosomal subunit protein uL22c (rpl22-A).